We begin with the raw amino-acid sequence, 23 residues long: NADP phosphatase 2 (23 aa).

As to quaternary structure, homodimer.

The protein localises to the cytoplasm. This chain is NADP phosphatase 2, found in Arthrobacter sp. (strain KM).